The primary structure comprises 823 residues: Leucine--tRNA ligase (823 aa).

The short motif at 42 to 52 (PYPSGTLHMGH) is the 'HIGH' region element. The 'KMSKS' region signature appears at 575–579 (KMSKS). Position 578 (Lys578) interacts with ATP.

This sequence belongs to the class-I aminoacyl-tRNA synthetase family.

It localises to the cytoplasm. It catalyses the reaction tRNA(Leu) + L-leucine + ATP = L-leucyl-tRNA(Leu) + AMP + diphosphate. This is Leucine--tRNA ligase from Legionella pneumophila subsp. pneumophila (strain Philadelphia 1 / ATCC 33152 / DSM 7513).